The chain runs to 466 residues: Soluble pyridine nucleotide transhydrogenase (466 aa).

36–45 (ERYHNIGGGC) is a binding site for FAD.

This sequence belongs to the class-I pyridine nucleotide-disulfide oxidoreductase family. FAD is required as a cofactor.

It localises to the cytoplasm. It catalyses the reaction NAD(+) + NADPH = NADH + NADP(+). Its function is as follows. Conversion of NADPH, generated by peripheral catabolic pathways, to NADH, which can enter the respiratory chain for energy generation. This is Soluble pyridine nucleotide transhydrogenase from Erwinia tasmaniensis (strain DSM 17950 / CFBP 7177 / CIP 109463 / NCPPB 4357 / Et1/99).